Here is a 145-residue protein sequence, read N- to C-terminus: Large ribosomal subunit protein uL13 (145 aa).

Belongs to the universal ribosomal protein uL13 family. Part of the 50S ribosomal subunit.

This protein is one of the early assembly proteins of the 50S ribosomal subunit, although it is not seen to bind rRNA by itself. It is important during the early stages of 50S assembly. The sequence is that of Large ribosomal subunit protein uL13 from Bacillus velezensis (strain DSM 23117 / BGSC 10A6 / LMG 26770 / FZB42) (Bacillus amyloliquefaciens subsp. plantarum).